A 198-amino-acid chain; its full sequence is Phosphoheptose isomerase (198 aa).

Residues 36–195 (AIEVYQNGNK…EEAIFRNKFV (160 aa)) enclose the SIS domain. 51 to 53 (NGG) provides a ligand contact to substrate. Positions 60 and 64 each coordinate Zn(2+). Residues Glu64, 93–94 (ND), 119–121 (STS), Ser124, and Gln171 each bind substrate. Zn(2+) contacts are provided by Gln171 and His179.

The protein belongs to the SIS family. GmhA subfamily. The cofactor is Zn(2+).

It is found in the cytoplasm. It catalyses the reaction 2 D-sedoheptulose 7-phosphate = D-glycero-alpha-D-manno-heptose 7-phosphate + D-glycero-beta-D-manno-heptose 7-phosphate. Its pathway is carbohydrate biosynthesis; D-glycero-D-manno-heptose 7-phosphate biosynthesis; D-glycero-alpha-D-manno-heptose 7-phosphate and D-glycero-beta-D-manno-heptose 7-phosphate from sedoheptulose 7-phosphate: step 1/1. It participates in cell surface structure biogenesis; S-layer biogenesis. In terms of biological role, catalyzes the isomerization of sedoheptulose 7-phosphate in D-glycero-D-manno-heptose 7-phosphate. This chain is Phosphoheptose isomerase, found in Aneurinibacillus thermoaerophilus.